Consider the following 165-residue polypeptide: MAPEENAGTELLLQSLERRFLAARALRSFPWQSLEAKLRDSSDSELLRDILQKHEAVHTEPLDELYEVLAETLMAKESTQGHRSYLLTCCIAQKPSCRWSGSCGGWLPAGSTSGLLKSMWPLPSATQRRASCSPLSYAGLGSDGKWNLVMTRNCFPTKSTWRWQC.

This sequence belongs to the class I-like SAM-binding methyltransferase superfamily. EEF2KMT family.

This is Putative protein FAM86C2P (FAM86C2P) from Homo sapiens (Human).